We begin with the raw amino-acid sequence, 101 residues long: Urease subunit beta (101 aa).

It belongs to the urease beta subunit family. Heterotrimer of UreA (gamma), UreB (beta) and UreC (alpha) subunits. Three heterotrimers associate to form the active enzyme.

Its subcellular location is the cytoplasm. It carries out the reaction urea + 2 H2O + H(+) = hydrogencarbonate + 2 NH4(+). The protein operates within nitrogen metabolism; urea degradation; CO(2) and NH(3) from urea (urease route): step 1/1. The polypeptide is Urease subunit beta (Burkholderia cenocepacia (strain ATCC BAA-245 / DSM 16553 / LMG 16656 / NCTC 13227 / J2315 / CF5610) (Burkholderia cepacia (strain J2315))).